The following is a 120-amino-acid chain: NAD(P)H-quinone oxidoreductase subunit 3 (120 aa).

A run of 3 helical transmembrane segments spans residues phenylalanine 10–isoleucine 30, methionine 64–valine 84, and leucine 89–alanine 109.

Belongs to the complex I subunit 3 family. NDH-1 can be composed of about 15 different subunits; different subcomplexes with different compositions have been identified which probably have different functions.

Its subcellular location is the cellular thylakoid membrane. It catalyses the reaction a plastoquinone + NADH + (n+1) H(+)(in) = a plastoquinol + NAD(+) + n H(+)(out). The catalysed reaction is a plastoquinone + NADPH + (n+1) H(+)(in) = a plastoquinol + NADP(+) + n H(+)(out). Functionally, NDH-1 shuttles electrons from an unknown electron donor, via FMN and iron-sulfur (Fe-S) centers, to quinones in the respiratory and/or the photosynthetic chain. The immediate electron acceptor for the enzyme in this species is believed to be plastoquinone. Couples the redox reaction to proton translocation, and thus conserves the redox energy in a proton gradient. Cyanobacterial NDH-1 also plays a role in inorganic carbon-concentration. The chain is NAD(P)H-quinone oxidoreductase subunit 3 from Prochlorococcus marinus (strain MIT 9215).